The following is a 425-amino-acid chain: Serine--tRNA ligase (425 aa).

232–234 provides a ligand contact to L-serine; the sequence is TSE. Residues 263-265 and Val279 each bind ATP; that span reads RRE. Residue Glu286 participates in L-serine binding. 350 to 353 provides a ligand contact to ATP; the sequence is EAVS. L-serine is bound at residue Thr387.

The protein belongs to the class-II aminoacyl-tRNA synthetase family. Type-1 seryl-tRNA synthetase subfamily. As to quaternary structure, homodimer. The tRNA molecule binds across the dimer.

The protein resides in the cytoplasm. It catalyses the reaction tRNA(Ser) + L-serine + ATP = L-seryl-tRNA(Ser) + AMP + diphosphate + H(+). The catalysed reaction is tRNA(Sec) + L-serine + ATP = L-seryl-tRNA(Sec) + AMP + diphosphate + H(+). Its pathway is aminoacyl-tRNA biosynthesis; selenocysteinyl-tRNA(Sec) biosynthesis; L-seryl-tRNA(Sec) from L-serine and tRNA(Sec): step 1/1. In terms of biological role, catalyzes the attachment of serine to tRNA(Ser). Is also able to aminoacylate tRNA(Sec) with serine, to form the misacylated tRNA L-seryl-tRNA(Sec), which will be further converted into selenocysteinyl-tRNA(Sec). The protein is Serine--tRNA ligase of Methanoculleus marisnigri (strain ATCC 35101 / DSM 1498 / JR1).